A 154-amino-acid chain; its full sequence is Myoglobin (154 aa).

Residues 2-148 (GLSDGEWQSV…FRNDIAAKYK (147 aa)) enclose the Globin domain. A Phosphoserine modification is found at Ser-4. His-65 serves as a coordination point for nitrite. His-65 is an O2 binding site. Position 68 is a phosphothreonine (Thr-68). His-94 is a binding site for heme b.

Belongs to the globin family. In terms of assembly, monomeric.

It localises to the cytoplasm. The protein localises to the sarcoplasm. The catalysed reaction is Fe(III)-heme b-[protein] + nitric oxide + H2O = Fe(II)-heme b-[protein] + nitrite + 2 H(+). The enzyme catalyses H2O2 + AH2 = A + 2 H2O. Functionally, monomeric heme protein which primary function is to store oxygen and facilitate its diffusion within muscle tissues. Reversibly binds oxygen through a pentacoordinated heme iron and enables its timely and efficient release as needed during periods of heightened demand. Depending on the oxidative conditions of tissues and cells, and in addition to its ability to bind oxygen, it also has a nitrite reductase activity whereby it regulates the production of bioactive nitric oxide. Under stress conditions, like hypoxia and anoxia, it also protects cells against reactive oxygen species thanks to its pseudoperoxidase activity. The chain is Myoglobin (MB) from Nycticebus coucang (Slow loris).